The primary structure comprises 462 residues: uncharacterized protein (462 aa).

WD repeat units lie at residues 170-209 (GGER…EVQL), 212-260 (GHTD…PLLR), 263-302 (GHLA…ELLM), 305-344 (GHSE…SIMV), 347-386 (EHIR…LAHT), 389-430 (AHSS…LIKS), and 433-462 (GHEE…LWYP).

Its subcellular location is the cytoplasm. This is an uncharacterized protein from Schizosaccharomyces pombe (strain 972 / ATCC 24843) (Fission yeast).